Consider the following 311-residue polypeptide: MGSFQLEDFAAGWIGGAASVIVGHPLDTVKTRLQAGVGYGNTLSCIRVVYRRESMFGFFKGMSFPLASIAVYNSVVFGVFSNTQRFLSQHRCGEPEASPPRTLSDLLLASMVAGVVSVGLGGPVDLIKIRLQMQTQPFRDANLGLKSRAVAPAEQPAYQGPVHCITTIVRNEGLAGLYRGASAMLLRDVPGYCLYFIPYVFLSEWITPEACTGPSPCAVWLAGGMAGAISWGTATPMDVVKSRLQADGVYLNKYKGVLDCISQSYQKEGLKVFFRGITVNAVRGFPMSAAMFLGYELSLQAIRGDHAVTSP.

3 Solcar repeats span residues 3 to 86 (SFQL…TQRF), 101 to 205 (RTLS…LSEW), and 214 to 301 (PSPC…SLQA). The next 6 helical transmembrane spans lie at 9-29 (FAAGWIGGAASVIVGHPLDTV), 61-81 (GMSFPLASIAVYNSVVFGVFS), 107-127 (LLASMVAGVVSVGLGGPVDLI), 189-209 (VPGYCLYFIPYVFLSEWITPE), 217-237 (CAVWLAGGMAGAISWGTATPM), and 277-295 (ITVNAVRGFPMSAAMFLGY).

It belongs to the mitochondrial carrier (TC 2.A.29) family.

Its subcellular location is the mitochondrion inner membrane. This chain is Solute carrier family 25 member 48 (SLC25A48), found in Homo sapiens (Human).